Consider the following 284-residue polypeptide: Acetyl-coenzyme A carboxylase carboxyl transferase subunit beta (284 aa).

Residues 25–284 (LWTKCPKCES…ICRMLLQKSA (260 aa)) form the CoA carboxyltransferase N-terminal domain. Cys29, Cys32, Cys48, and Cys51 together coordinate Zn(2+). The C4-type zinc finger occupies 29 to 51 (CPKCESTLYRAEVRRNLEVCPKC).

Belongs to the AccD/PCCB family. As to quaternary structure, acetyl-CoA carboxylase is a heterohexamer composed of biotin carboxyl carrier protein (AccB), biotin carboxylase (AccC) and two subunits each of ACCase subunit alpha (AccA) and ACCase subunit beta (AccD). The cofactor is Zn(2+).

Its subcellular location is the cytoplasm. It carries out the reaction N(6)-carboxybiotinyl-L-lysyl-[protein] + acetyl-CoA = N(6)-biotinyl-L-lysyl-[protein] + malonyl-CoA. It participates in lipid metabolism; malonyl-CoA biosynthesis; malonyl-CoA from acetyl-CoA: step 1/1. In terms of biological role, component of the acetyl coenzyme A carboxylase (ACC) complex. Biotin carboxylase (BC) catalyzes the carboxylation of biotin on its carrier protein (BCCP) and then the CO(2) group is transferred by the transcarboxylase to acetyl-CoA to form malonyl-CoA. The sequence is that of Acetyl-coenzyme A carboxylase carboxyl transferase subunit beta from Hydrogenovibrio crunogenus (strain DSM 25203 / XCL-2) (Thiomicrospira crunogena).